The chain runs to 285 residues: 4-diphosphocytidyl-2-C-methyl-D-erythritol kinase (285 aa).

Residue K10 is part of the active site. 92 to 102 (PFGAGLGGGSS) lines the ATP pocket. The active site involves D134.

It belongs to the GHMP kinase family. IspE subfamily.

It carries out the reaction 4-CDP-2-C-methyl-D-erythritol + ATP = 4-CDP-2-C-methyl-D-erythritol 2-phosphate + ADP + H(+). The protein operates within isoprenoid biosynthesis; isopentenyl diphosphate biosynthesis via DXP pathway; isopentenyl diphosphate from 1-deoxy-D-xylulose 5-phosphate: step 3/6. In terms of biological role, catalyzes the phosphorylation of the position 2 hydroxy group of 4-diphosphocytidyl-2C-methyl-D-erythritol. This Chloroherpeton thalassium (strain ATCC 35110 / GB-78) protein is 4-diphosphocytidyl-2-C-methyl-D-erythritol kinase.